We begin with the raw amino-acid sequence, 346 residues long: Probable galacturonosyltransferase-like 6 (346 aa).

Residues 1-21 (MLWITRFAGLFSAAMAVIVLS) traverse the membrane as a helical; Signal-anchor for type II membrane protein segment. Over 22–346 (PSLQSFPPAA…TPYDLYRHSH (325 aa)) the chain is Lumenal. N-linked (GlcNAc...) asparagine glycosylation occurs at asparagine 203.

Belongs to the glycosyltransferase 8 family.

It localises to the golgi apparatus membrane. The protein operates within glycan metabolism; pectin biosynthesis. Functionally, may be involved in pectin and/or xylans biosynthesis in cell walls. This Arabidopsis thaliana (Mouse-ear cress) protein is Probable galacturonosyltransferase-like 6 (GATL6).